Here is a 592-residue protein sequence, read N- to C-terminus: Arginine--tRNA ligase (592 aa).

Positions A134 to H144 match the 'HIGH' region motif.

It belongs to the class-I aminoacyl-tRNA synthetase family. As to quaternary structure, monomer.

Its subcellular location is the cytoplasm. It catalyses the reaction tRNA(Arg) + L-arginine + ATP = L-arginyl-tRNA(Arg) + AMP + diphosphate. This is Arginine--tRNA ligase from Coxiella burnetii (strain CbuG_Q212) (Coxiella burnetii (strain Q212)).